The chain runs to 638 residues: Threonine--tRNA ligase (638 aa).

Positions 1–61 (MPVITLPDGS…DADAQLQIIT (61 aa)) constitute a TGS domain. Positions 243–534 (DHRKIGKALN…LTEEFAGFFP (292 aa)) are catalytic. Zn(2+)-binding residues include Cys334, His385, and His511.

It belongs to the class-II aminoacyl-tRNA synthetase family. Homodimer. Zn(2+) serves as cofactor.

It localises to the cytoplasm. The enzyme catalyses tRNA(Thr) + L-threonine + ATP = L-threonyl-tRNA(Thr) + AMP + diphosphate + H(+). Catalyzes the attachment of threonine to tRNA(Thr) in a two-step reaction: L-threonine is first activated by ATP to form Thr-AMP and then transferred to the acceptor end of tRNA(Thr). Also edits incorrectly charged L-seryl-tRNA(Thr). This Alteromonas mediterranea (strain DSM 17117 / CIP 110805 / LMG 28347 / Deep ecotype) protein is Threonine--tRNA ligase.